The primary structure comprises 168 residues: Transcriptional repressor NrdR (168 aa).

Residues 3-34 (CPFCQDAENKVIDSRESHEGSVIRRRRECLTC) fold into a zinc finger. The region spanning 49-139 (PLIVKKDGRR…VYRSFRDIAE (91 aa)) is the ATP-cone domain.

The protein belongs to the NrdR family. Zn(2+) is required as a cofactor.

Negatively regulates transcription of bacterial ribonucleotide reductase nrd genes and operons by binding to NrdR-boxes. The protein is Transcriptional repressor NrdR of Myxococcus xanthus (strain DK1622).